Reading from the N-terminus, the 204-residue chain is MKKFILASNNAHKVKEIKEILKDFNLNILSLNEAGIDIDVEEDGKTFEENSFKKANEIRKYLLSKGESDFIVMADDSGLEVDYLNGAPGIYSARYAGEHGNDSKNNEKLLEELKNVKDDERKANFICVIVAVTDKGEKIVAEGKSYGLILEALSGNEGFGYDPLFFVPEYKKTFAEMTSDEKNAISHRGRALEKLKDNLKGILK.

8–13 (SNNAHK) is a substrate binding site. Glutamate 41 and aspartate 76 together coordinate Mg(2+). Catalysis depends on aspartate 76, which acts as the Proton acceptor. Substrate-binding positions include serine 77, 159-162 (FGYD), lysine 182, and 187-188 (HR).

This sequence belongs to the HAM1 NTPase family. Homodimer. Mg(2+) is required as a cofactor.

The enzyme catalyses XTP + H2O = XMP + diphosphate + H(+). It carries out the reaction dITP + H2O = dIMP + diphosphate + H(+). It catalyses the reaction ITP + H2O = IMP + diphosphate + H(+). Functionally, pyrophosphatase that catalyzes the hydrolysis of nucleoside triphosphates to their monophosphate derivatives, with a high preference for the non-canonical purine nucleotides XTP (xanthosine triphosphate), dITP (deoxyinosine triphosphate) and ITP. Seems to function as a house-cleaning enzyme that removes non-canonical purine nucleotides from the nucleotide pool, thus preventing their incorporation into DNA/RNA and avoiding chromosomal lesions. The polypeptide is dITP/XTP pyrophosphatase (Clostridium perfringens (strain 13 / Type A)).